The sequence spans 254 residues: MTQHPTQSPQFFLTAPSPCPYLDGQFERKVFTHLVGDKASEMNDLLTQGGFRRSQNIAYRPACETCRACVSVRILAQEFTASRNMKRVLQHNSDLVGAMHNAEPSTEQYSLFRSYLDARHRRGGMSDMTVLDYAMMVEDTHVDTKVIEYRRRGPDTFITGKGQGELIAVALTDKMADGLSMVYSYFNPEFEERSLGTFMILDHIARARAMGLPHVYLGYWVNGSRKMNYKMRFMPQEHLGPKGWERYTNEAVSR.

The protein belongs to the R-transferase family. Bpt subfamily.

Its subcellular location is the cytoplasm. The catalysed reaction is N-terminal L-glutamyl-[protein] + L-leucyl-tRNA(Leu) = N-terminal L-leucyl-L-glutamyl-[protein] + tRNA(Leu) + H(+). It carries out the reaction N-terminal L-aspartyl-[protein] + L-leucyl-tRNA(Leu) = N-terminal L-leucyl-L-aspartyl-[protein] + tRNA(Leu) + H(+). In terms of biological role, functions in the N-end rule pathway of protein degradation where it conjugates Leu from its aminoacyl-tRNA to the N-termini of proteins containing an N-terminal aspartate or glutamate. The protein is Aspartate/glutamate leucyltransferase of Mesorhizobium japonicum (strain LMG 29417 / CECT 9101 / MAFF 303099) (Mesorhizobium loti (strain MAFF 303099)).